The following is a 424-amino-acid chain: Enolase (424 aa).

Gln162 is a (2R)-2-phosphoglycerate binding site. Residue Glu204 is the Proton donor of the active site. 3 residues coordinate Mg(2+): Asp241, Glu284, and Asp311. 4 residues coordinate (2R)-2-phosphoglycerate: Lys336, Arg365, Ser366, and Lys387. Lys336 acts as the Proton acceptor in catalysis.

Belongs to the enolase family. Mg(2+) serves as cofactor.

The protein localises to the cytoplasm. The protein resides in the secreted. It is found in the cell surface. It catalyses the reaction (2R)-2-phosphoglycerate = phosphoenolpyruvate + H2O. It participates in carbohydrate degradation; glycolysis; pyruvate from D-glyceraldehyde 3-phosphate: step 4/5. Functionally, catalyzes the reversible conversion of 2-phosphoglycerate (2-PG) into phosphoenolpyruvate (PEP). It is essential for the degradation of carbohydrates via glycolysis. In Rhizobium leguminosarum bv. trifolii (strain WSM2304), this protein is Enolase.